The chain runs to 315 residues: Tyrosine recombinase XerC (315 aa).

A Core-binding (CB) domain is found at Met1 to Val103. Residues Glu124–Asp306 enclose the Tyr recombinase domain. Residues Arg164, Lys188, His258, Arg261, and His284 contribute to the active site. Residue Tyr293 is the O-(3'-phospho-DNA)-tyrosine intermediate of the active site.

This sequence belongs to the 'phage' integrase family. XerC subfamily. Forms a cyclic heterotetrameric complex composed of two molecules of XerC and two molecules of XerD.

It localises to the cytoplasm. In terms of biological role, site-specific tyrosine recombinase, which acts by catalyzing the cutting and rejoining of the recombining DNA molecules. The XerC-XerD complex is essential to convert dimers of the bacterial chromosome into monomers to permit their segregation at cell division. It also contributes to the segregational stability of plasmids. The chain is Tyrosine recombinase XerC from Chlamydia trachomatis serovar L2b (strain UCH-1/proctitis).